The following is a 37-amino-acid chain: Cytochrome b6-f complex subunit 5 (37 aa).

A helical transmembrane segment spans residues 5–25; that stretch reads LLFGIVLGLIPVTLVGLFVAA.

This sequence belongs to the PetG family. In terms of assembly, the 4 large subunits of the cytochrome b6-f complex are cytochrome b6, subunit IV (17 kDa polypeptide, PetD), cytochrome f and the Rieske protein, while the 4 small subunits are PetG, PetL, PetM and PetN. The complex functions as a dimer.

The protein resides in the plastid. Its subcellular location is the chloroplast thylakoid membrane. In terms of biological role, component of the cytochrome b6-f complex, which mediates electron transfer between photosystem II (PSII) and photosystem I (PSI), cyclic electron flow around PSI, and state transitions. PetG is required for either the stability or assembly of the cytochrome b6-f complex. This Rhodomonas salina (Cryptomonas salina) protein is Cytochrome b6-f complex subunit 5.